A 102-amino-acid chain; its full sequence is A-type ATP synthase subunit F (102 aa).

The protein belongs to the V-ATPase F subunit family. Has multiple subunits with at least A(3), B(3), C, D, E, F, H, I and proteolipid K(x).

It is found in the cell membrane. Component of the A-type ATP synthase that produces ATP from ADP in the presence of a proton gradient across the membrane. The chain is A-type ATP synthase subunit F from Thermococcus kodakarensis (strain ATCC BAA-918 / JCM 12380 / KOD1) (Pyrococcus kodakaraensis (strain KOD1)).